We begin with the raw amino-acid sequence, 62 residues long: Photosystem II reaction center protein Z (62 aa).

The residue at position 1 (M1) is an N-formylmethionine. The Lumenal segment spans residues 1–4 (MTIL). Residues 5-25 (FQLALAALVILSFVMVIGVPV) form a helical membrane-spanning segment. Residues 26-36 (AYASPQDWDRS) lie on the Cytoplasmic side of the membrane. The helical transmembrane segment at 37–58 (KQLIFLGSGLWIALVLVVGVLN) threads the bilayer. The Lumenal portion of the chain corresponds to 59–62 (FFVV).

The protein belongs to the PsbZ family. In terms of assembly, PSII is composed of 1 copy each of membrane proteins PsbA, PsbB, PsbC, PsbD, PsbE, PsbF, PsbH, PsbI, PsbJ, PsbK, PsbL, PsbM, PsbT, PsbX, PsbY, PsbZ, Psb30/Ycf12, peripheral proteins PsbO, CyanoQ (PsbQ), PsbU, PsbV and a large number of cofactors. It forms dimeric complexes. Part of a photosystem II (PSII) assembly intermediate complex PSII-I; crystallized from a strain deleted of psbJ, it forms monomeric PSII before addition of the oxygen evolving complex. PSII-I includes 3 assembly factors not found in mature PSII (Psb27, Psb28 and Psb34). It depends on PSII binds multiple chlorophylls, carotenoids and specific lipids. as a cofactor.

It localises to the cellular thylakoid membrane. May control the interaction of photosystem II (PSII) cores with the light-harvesting antenna, regulates electron flow through the 2 photosystem reaction centers. PSII is a light-driven water plastoquinone oxidoreductase, using light energy to abstract electrons from H(2)O, generating a proton gradient subsequently used for ATP formation. Functionally, may also aid in binding of PsbK, Psb30/Ycf12 and the oxygen-evolving complex to PSII, at least in vitro. This chain is Photosystem II reaction center protein Z, found in Thermosynechococcus vestitus (strain NIES-2133 / IAM M-273 / BP-1).